We begin with the raw amino-acid sequence, 269 residues long: Regulatory protein RecX (269 aa).

The protein belongs to the RecX family.

It localises to the cytoplasm. Modulates RecA activity. The sequence is that of Regulatory protein RecX from Geobacillus kaustophilus (strain HTA426).